Reading from the N-terminus, the 254-residue chain is Thiazole synthase (254 aa).

Lysine 96 serves as the catalytic Schiff-base intermediate with DXP. 1-deoxy-D-xylulose 5-phosphate is bound by residues glycine 157, 183–184 (AG), and 205–206 (NT).

Belongs to the ThiG family. As to quaternary structure, homotetramer. Forms heterodimers with either ThiH or ThiS.

The protein localises to the cytoplasm. The catalysed reaction is [ThiS sulfur-carrier protein]-C-terminal-Gly-aminoethanethioate + 2-iminoacetate + 1-deoxy-D-xylulose 5-phosphate = [ThiS sulfur-carrier protein]-C-terminal Gly-Gly + 2-[(2R,5Z)-2-carboxy-4-methylthiazol-5(2H)-ylidene]ethyl phosphate + 2 H2O + H(+). It participates in cofactor biosynthesis; thiamine diphosphate biosynthesis. In terms of biological role, catalyzes the rearrangement of 1-deoxy-D-xylulose 5-phosphate (DXP) to produce the thiazole phosphate moiety of thiamine. Sulfur is provided by the thiocarboxylate moiety of the carrier protein ThiS. In vitro, sulfur can be provided by H(2)S. This chain is Thiazole synthase, found in Clostridium perfringens (strain 13 / Type A).